Consider the following 689-residue polypeptide: Glycine--tRNA ligase beta subunit (689 aa).

It belongs to the class-II aminoacyl-tRNA synthetase family. As to quaternary structure, tetramer of two alpha and two beta subunits.

It localises to the cytoplasm. It catalyses the reaction tRNA(Gly) + glycine + ATP = glycyl-tRNA(Gly) + AMP + diphosphate. In Escherichia coli (strain K12 / MC4100 / BW2952), this protein is Glycine--tRNA ligase beta subunit.